A 200-amino-acid polypeptide reads, in one-letter code: 7-methyl-GTP pyrophosphatase (200 aa).

The active-site Proton acceptor is Asp69.

The protein belongs to the Maf family. YceF subfamily. Requires a divalent metal cation as cofactor.

It is found in the cytoplasm. It carries out the reaction N(7)-methyl-GTP + H2O = N(7)-methyl-GMP + diphosphate + H(+). Functionally, nucleoside triphosphate pyrophosphatase that hydrolyzes 7-methyl-GTP (m(7)GTP). May have a dual role in cell division arrest and in preventing the incorporation of modified nucleotides into cellular nucleic acids. The polypeptide is 7-methyl-GTP pyrophosphatase (Colwellia psychrerythraea (strain 34H / ATCC BAA-681) (Vibrio psychroerythus)).